Consider the following 402-residue polypeptide: Putative RNA-guided DNA endonuclease InsQ (402 aa).

Active-site residues include aspartate 183 and glutamate 267. Zn(2+) contacts are provided by cysteine 334, cysteine 337, cysteine 353, and cysteine 356. Aspartate 363 is a catalytic residue.

This sequence in the N-terminal section; belongs to the transposase 2 family. The protein in the C-terminal section; belongs to the transposase 35 family.

Functionally, an RNA-guided dsDNA endonuclease. When guided by an RNA derived from the right-end element of its insertion sequence element (IS), cleaves DNA downstream of the transposon-associated motif (TAM). Cleaves supercoiled and linear DNA in a staggered manner 15-21 bases from the TAM yielding 5'-overhangs. Binds reRNA, an approximately 150 nucleotide base sRNA derived from the 3' end of its own gene, the right end (RE) of the insertion sequence (IS) plus sequence downstream of the IS. In terms of biological role, not required for transposition of the insertion element. The corresponding transposase in strains MG1655 and W3110 is a truncated pseudogene (yncK). The protein is Putative RNA-guided DNA endonuclease InsQ (insQ) of Escherichia coli (strain K12).